The chain runs to 2559 residues: Nonribosomal peptide synthetase asqK (2559 aa).

The adenylation 1 stretch occupies residues 90–474; that stretch reads YRPSHTAIHA…SRKDSQVKIR (385 aa). The Carrier 1 domain occupies 593 to 669; that stretch reads TNIEQLVHEL…SLVHYPAGLE (77 aa). S627 carries the post-translational modification O-(pantetheine 4'-phosphoryl)serine. A condensation 1 region spans residues 695-989; the sequence is TVEQSFSQAR…GNVQCIRTKV (295 aa). The tract at residues 1155-1562 is adenylation 2; sequence FDEQVRAQTD…GRMDQQVKVR (408 aa). Residues 1681–1776 are methyltransferase; the sequence is LEIGTGSGMI…NTIKDLVRQG (96 aa). Residues 2090-2164 form the Carrier 2 domain; sequence AFTSEIERAV…GLAQHLQGLG (75 aa). S2124 bears the O-(pantetheine 4'-phosphoryl)serine mark. Residues 2261–2409 form a condensation 2 region; sequence FDGVSLSAIL…VNRCLLRVKV (149 aa).

The protein belongs to the NRP synthetase family.

The catalysed reaction is O-methyl-L-tyrosine + anthranilate + S-adenosyl-L-methionine + 2 ATP = (-)-4'-methoxycyclopeptine + 2 AMP + S-adenosyl-L-homocysteine + 2 diphosphate + 2 H(+). The enzyme catalyses anthranilate + L-phenylalanine + S-adenosyl-L-methionine + 2 ATP = cyclopeptine + 2 AMP + S-adenosyl-L-homocysteine + 2 diphosphate + 2 H(+). Its pathway is secondary metabolite biosynthesis. The protein operates within alkaloid biosynthesis. It participates in mycotoxin biosynthesis. Functionally, nonribosomal peptide synthetase; part of the gene cluster that mediates the biosynthesis of the aspoquinolone mycotoxins. The first stage is catalyzed by the nonribosomal peptide synthetase asqK that condenses anthranilic acid and O-methyl-L-tyrosine to produce 4'-methoxycyclopeptin. AsqK is also able to use anthranilic acid and L-phenylalanine as substrates to produce cyclopeptin, but at a tenfold lower rate. Within the pathway, 4'-methoxycyclopeptin is then converted to 4'-methoxydehydrocyclopeptin by the ketoglutarate-dependent dioxygenase asqJ. AsqJ also converts its first product 4'-methoxydehydrocyclopeptin to 4'-methoxycyclopenin. The following conversion of 4'-methoxycyclopenin into 4'-methoxyviridicatin is catalyzed by the cyclopenase asqI. 4'-methoxyviridicatin is the precursor of quinolone natural products, and is further converted to quinolinone B. The prenyltransferase asqH1 then catalyzes the canonical Friedel-Crafts alkylation of quinolinone B with dimethylallyl cation to yield dimethylallyl quinolone, which is subjected to FAD-dependent dehydrogenation by the FAD-linked oxidoreductase asqF to yield conjugated aryl diene. The delta(3') double bond then serves as the site of the second alkylation with DMAPP catalyzed by the prenyltransferase asqH2 to yield a carbenium ion intermediate, which can be attacked by H(2)O to yield a styrenyl quinolone containing a C3'-hydroxyprenyl chain. The FAD-dependent monooxygenase asqG performs epoxidation of the terminal C7'-C8' olefin. Finally, after dehydratation of the epoxide at C3 by asqC, the quinolone epoxide rearrangement protein asqO catalyzes an enzymatic 3-exo-tet cyclization to yield the cyclopropyl-THF ring system in aspoquinolone. The protein is Nonribosomal peptide synthetase asqK of Emericella nidulans (strain FGSC A4 / ATCC 38163 / CBS 112.46 / NRRL 194 / M139) (Aspergillus nidulans).